We begin with the raw amino-acid sequence, 335 residues long: Methionine import ATP-binding protein MetN 2 (335 aa).

One can recognise an ABC transporter domain in the interval 2-242 (IEFHNVHKTY…PQHSTTKRFV (241 aa)). 38 to 45 (GHSGAGKS) lines the ATP pocket.

The protein belongs to the ABC transporter superfamily. Methionine importer (TC 3.A.1.24) family. As to quaternary structure, the complex is composed of two ATP-binding proteins (MetN), two transmembrane proteins (MetI) and a solute-binding protein (MetQ).

It is found in the cell inner membrane. The enzyme catalyses L-methionine(out) + ATP + H2O = L-methionine(in) + ADP + phosphate + H(+). It carries out the reaction D-methionine(out) + ATP + H2O = D-methionine(in) + ADP + phosphate + H(+). Functionally, part of the ABC transporter complex MetNIQ involved in methionine import. Responsible for energy coupling to the transport system. In Pseudomonas syringae pv. tomato (strain ATCC BAA-871 / DC3000), this protein is Methionine import ATP-binding protein MetN 2.